A 313-amino-acid chain; its full sequence is Malate dehydrogenase (313 aa).

Residues 8 to 13 (GAGNVG) and Asp-33 each bind NAD(+). Substrate-binding residues include Arg-83 and Arg-89. NAD(+)-binding positions include Asn-96 and 119 to 121 (ISN). Positions 121 and 152 each coordinate substrate. Residue His-176 is the Proton acceptor of the active site.

This sequence belongs to the LDH/MDH superfamily. MDH type 3 family.

It catalyses the reaction (S)-malate + NAD(+) = oxaloacetate + NADH + H(+). In terms of biological role, catalyzes the reversible oxidation of malate to oxaloacetate. This is Malate dehydrogenase from Bacteroides fragilis (strain ATCC 25285 / DSM 2151 / CCUG 4856 / JCM 11019 / LMG 10263 / NCTC 9343 / Onslow / VPI 2553 / EN-2).